We begin with the raw amino-acid sequence, 291 residues long: Trimeric intracellular cation channel type B (291 aa).

At 1–15 the chain is on the lumenal side; it reads MESPWNELTLAFSRT. Residues 16–33 traverse the membrane as a helical segment; that stretch reads SMFPFFDIAHYLVSVMAL. Residues 34-47 lie on the Cytoplasmic side of the membrane; that stretch reads KHQPGAAALAWKNP. A helical membrane pass occupies residues 48-69; sequence LSSWFTAMLHCFGGGILSCVLL. Topologically, residues 70–80 are lumenal; it reads AEPPLRFLANN. A helical membrane pass occupies residues 81–100; the sequence is TNILLASSIWYIAFFCPCDL. Residues 101-103 are Cytoplasmic-facing; sequence ISQ. A helical membrane pass occupies residues 104 to 122; sequence AYSFLPVQLLAAGMKEVTR. A 1,2-diacyl-sn-glycero-3-phospho-(1D-myo-inositol-4,5-bisphosphate)-binding residues include lysine 118 and arginine 122. At 123–138 the chain is on the lumenal side; that stretch reads TWKIVGGVTHANSYYK. The chain crosses the membrane as a helical span at residues 139 to 156; the sequence is NGWIVMIAVGWARGAGGS. The Cytoplasmic segment spans residues 157-179; that stretch reads IITNFEQLVKGCWKPEAEEWLKM. A helical transmembrane segment spans residues 180-196; that stretch reads SYPAKVTLLGSVIFTFQ. Residues 197–207 lie on the Lumenal side of the membrane; it reads QTKYLAISKHN. The helical transmembrane segment at 208-225 threads the bilayer; that stretch reads LMFLFTVFLVATKITMMI. Over 226-291 the chain is Cytoplasmic; the sequence is TKTALVPFAC…VKKKHSKKTE (66 aa). Positions 257-291 are disordered; the sequence is KSETKSSFNGTGSSTSKPVANASDKVKKKHSKKTE. The span at 261 to 274 shows a compositional bias: polar residues; that stretch reads KSSFNGTGSSTSKP. Residue serine 262 is modified to Phosphoserine. Residues 282–291 are compositionally biased toward basic residues; it reads VKKKHSKKTE.

The protein belongs to the TMEM38 family. Homotrimer; conformation seems to be controled by binding to diacylglycerol (DAG).

Its subcellular location is the endoplasmic reticulum membrane. The enzyme catalyses K(+)(in) = K(+)(out). Channel activity is activated by increased cytosolic Ca(2+) levels and blocked by luminal high Ca(2+) levels. Intracellular monovalent cation channel required for maintenance of rapid intracellular calcium release. Acts as a potassium counter-ion channel that functions in synchronization with calcium release from intracellular stores. Activated by increased cytosolic Ca(2+) levels. The sequence is that of Trimeric intracellular cation channel type B (TMEM38B) from Bos taurus (Bovine).